The sequence spans 182 residues: IQ domain-containing protein F1 (182 aa).

Composition is skewed to basic and acidic residues over residues 1–10 (MGEEQQKPEE) and 31–43 (ETEK…KQEL). The interval 1-43 (MGEEQQKPEELNAPTDDAPQEKQQPADLSSETEKAKSKKKQEL) is disordered. 2 consecutive IQ domains span residues 45 to 74 (EKDQ…SAWI) and 101 to 130 (EQWA…AVRT).

Interacts with calmodulin. In terms of tissue distribution, specifically expressed in testes and mature spermatozoa (at protein level).

The protein localises to the cytoplasmic vesicle. The protein resides in the secretory vesicle. Its subcellular location is the acrosome. Its function is as follows. Involved in sperm capacitation and acrosome reaction. This chain is IQ domain-containing protein F1, found in Mus musculus (Mouse).